Here is a 156-residue protein sequence, read N- to C-terminus: Ribosome maturation factor RimP (156 aa).

This sequence belongs to the RimP family.

It localises to the cytoplasm. Required for maturation of 30S ribosomal subunits. This is Ribosome maturation factor RimP from Lysinibacillus sphaericus (strain C3-41).